Reading from the N-terminus, the 425-residue chain is 5-hydroxytryptamine receptor 7 (425 aa).

Over 1 to 72 (MLIQVQPSHL…LLYGDTEKIV (72 aa)) the chain is Extracellular. Asn-14, Asn-41, and Asn-51 each carry an N-linked (GlcNAc...) asparagine glycan. A helical membrane pass occupies residues 73-97 (IGVVLSIITLFTIAGNALVIISVCI). The Cytoplasmic segment spans residues 98–107 (VKKLRQPSNY). The helical transmembrane segment at 108–129 (LVVSLAAADLSVAVAVMPFVII) threads the bilayer. Residues 130-141 (TDLVGGEWLFGK) are Extracellular-facing. The helical transmembrane segment at 142-167 (VFCNVFIAMDVMCCTASIMTLCVISV) threads the bilayer. Cys-144 and Cys-220 are oxidised to a cystine. Asp-151 provides a ligand contact to serotonin. Topologically, residues 168 to 187 (DRYLGITRPLTYPARQNGKL) are cytoplasmic. The chain crosses the membrane as a helical span at residues 188-208 (MAKMVFIVWLLSASITLPPLF). Residues 209–226 (GWAKNVNVERVCLISQDF) lie on the Extracellular side of the membrane. A helical transmembrane segment spans residues 227 to 249 (GYTVYSTAVAFYIPMTVMLVMYQ). Over 250-322 (RIFVAAKISA…SIFKREQKAA (73 aa)) the chain is Cytoplasmic. The helical transmembrane segment at 323-348 (RTLGIIVGAFTFCWLPFFLLSTARPF) threads the bilayer. The Extracellular segment spans residues 349-359 (ICGIMCSCMPL). The helical transmembrane segment at 360 to 383 (RLERTLLWLGYTNSLINPLIYAFF) threads the bilayer. Residues 384–425 (NRDLRTTFWNLLRCKYTNINRRLSAASMHEALKVTERHEGIL) lie on the Cytoplasmic side of the membrane. Cys-397 carries the S-palmitoyl cysteine lipid modification.

It belongs to the G-protein coupled receptor 1 family.

It is found in the cell membrane. In terms of biological role, G-protein coupled receptor for 5-hydroxytryptamine (serotonin), a biogenic hormone that functions as a neurotransmitter, a hormone and a mitogen. Ligand binding causes a conformation change that triggers signaling via guanine nucleotide-binding proteins (G proteins) and modulates the activity of downstream effectors. HTR7 is coupled to G(s) G alpha proteins and mediates activation of adenylate cyclase activity. This chain is 5-hydroxytryptamine receptor 7 (htr7), found in Xenopus laevis (African clawed frog).